The primary structure comprises 743 residues: Phosphoribosylformylglycinamidine synthase subunit PurL (743 aa).

His54 is a catalytic residue. 2 residues coordinate ATP: Tyr57 and Lys96. Mg(2+) is bound at residue Glu98. Substrate contacts are provided by residues Ser99 to His102 and Arg121. His100 serves as the catalytic Proton acceptor. A Mg(2+)-binding site is contributed by Asp122. Gln245 lines the substrate pocket. Asp273 is a binding site for Mg(2+). Glu317–Gln319 provides a ligand contact to substrate. Positions 500 and 537 each coordinate ATP. A Mg(2+)-binding site is contributed by Asn538. Ser540 contributes to the substrate binding site.

The protein belongs to the FGAMS family. Monomer. Part of the FGAM synthase complex composed of 1 PurL, 1 PurQ and 2 PurS subunits.

Its subcellular location is the cytoplasm. It carries out the reaction N(2)-formyl-N(1)-(5-phospho-beta-D-ribosyl)glycinamide + L-glutamine + ATP + H2O = 2-formamido-N(1)-(5-O-phospho-beta-D-ribosyl)acetamidine + L-glutamate + ADP + phosphate + H(+). It participates in purine metabolism; IMP biosynthesis via de novo pathway; 5-amino-1-(5-phospho-D-ribosyl)imidazole from N(2)-formyl-N(1)-(5-phospho-D-ribosyl)glycinamide: step 1/2. In terms of biological role, part of the phosphoribosylformylglycinamidine synthase complex involved in the purines biosynthetic pathway. Catalyzes the ATP-dependent conversion of formylglycinamide ribonucleotide (FGAR) and glutamine to yield formylglycinamidine ribonucleotide (FGAM) and glutamate. The FGAM synthase complex is composed of three subunits. PurQ produces an ammonia molecule by converting glutamine to glutamate. PurL transfers the ammonia molecule to FGAR to form FGAM in an ATP-dependent manner. PurS interacts with PurQ and PurL and is thought to assist in the transfer of the ammonia molecule from PurQ to PurL. This is Phosphoribosylformylglycinamidine synthase subunit PurL from Bacillus pumilus (strain SAFR-032).